Here is a 185-residue protein sequence, read N- to C-terminus: Peptide deformylase (185 aa).

The Fe cation site is built by C98 and H140. Residue E141 is part of the active site. Residue H144 coordinates Fe cation.

It belongs to the polypeptide deformylase family. Fe(2+) serves as cofactor.

It carries out the reaction N-terminal N-formyl-L-methionyl-[peptide] + H2O = N-terminal L-methionyl-[peptide] + formate. Its function is as follows. Removes the formyl group from the N-terminal Met of newly synthesized proteins. Requires at least a dipeptide for an efficient rate of reaction. N-terminal L-methionine is a prerequisite for activity but the enzyme has broad specificity at other positions. This is Peptide deformylase from Parabacteroides distasonis (strain ATCC 8503 / DSM 20701 / CIP 104284 / JCM 5825 / NCTC 11152).